Reading from the N-terminus, the 879-residue chain is Prostaglandin F2 receptor negative regulator (879 aa).

Positions 1–21 (MGRPAPRPLLLALLSLAVCRG) are cleaved as a signal peptide. Ig-like C2-type domains are found at residues 22–129 (RVVR…ATVQ) and 149–268 (PSSR…KAVE). The Extracellular segment spans residues 22–832 (RVVRVPAGTL…MDVLNAFKYP (811 aa)). Intrachain disulfides connect Cys43-Cys119 and Cys169-Cys247. Asn44 carries an N-linked (GlcNAc...) asparagine glycan. The Cell attachment site motif lies at 89 to 91 (RGD). At Thr271 the chain carries Phosphothreonine. Ig-like C2-type domains follow at residues 276–389 (PTAL…WHKV), 406–527 (PEYQ…RNSS), 544–662 (ASED…AWSP), and 688–813 (PIFN…AEIH). Cys299 and Cys373 form a disulfide bridge. 3 N-linked (GlcNAc...) asparagine glycosylation sites follow: Asn300, Asn383, and Asn413. Residues 424–427 (PTEL) carry the Endoplasmic reticulum retention signal motif. A disulfide bridge links Cys429 with Cys515. N-linked (GlcNAc...) asparagine glycans are attached at residues Asn525, Asn600, Asn618, and Asn691. Cys571 and Cys655 form a disulfide bridge. The Cell attachment site signature appears at 703–705 (RGD). Cys711 and Cys793 are joined by a disulfide. Residues 833 to 853 (LLIGVGLSTVIGLLSCLIGYC) form a helical membrane-spanning segment. Topologically, residues 854–879 (SSHWCCKKEVRETRRERRRLMSMEMD) are cytoplasmic.

In terms of assembly, interacts with CD9 and CD81. Part of a complex composed of CD9, CD81 and IGSF8. Also seems to interact with CD63, CD82 and CD151. As to expression, reproductive tissues, lung and heart.

Its subcellular location is the endoplasmic reticulum membrane. It is found in the golgi apparatus. It localises to the trans-Golgi network membrane. Its function is as follows. Inhibits the binding of prostaglandin F2-alpha (PGF2-alpha) to its specific FP receptor, by decreasing the receptor number rather than the affinity constant. Functional coupling with the prostaglandin F2-alpha receptor seems to occur. In myoblasts, associates with tetraspanins CD9 and CD81 to prevent myotube fusion during muscle regeneration. This is Prostaglandin F2 receptor negative regulator (Ptgfrn) from Rattus norvegicus (Rat).